A 353-amino-acid polypeptide reads, in one-letter code: S-adenosylmethionine:tRNA ribosyltransferase-isomerase (353 aa).

Belongs to the QueA family. As to quaternary structure, monomer.

The protein localises to the cytoplasm. The catalysed reaction is 7-aminomethyl-7-carbaguanosine(34) in tRNA + S-adenosyl-L-methionine = epoxyqueuosine(34) in tRNA + adenine + L-methionine + 2 H(+). It functions in the pathway tRNA modification; tRNA-queuosine biosynthesis. Functionally, transfers and isomerizes the ribose moiety from AdoMet to the 7-aminomethyl group of 7-deazaguanine (preQ1-tRNA) to give epoxyqueuosine (oQ-tRNA). The polypeptide is S-adenosylmethionine:tRNA ribosyltransferase-isomerase (Nitrosomonas europaea (strain ATCC 19718 / CIP 103999 / KCTC 2705 / NBRC 14298)).